We begin with the raw amino-acid sequence, 788 residues long: Endonuclease MutS2 (788 aa).

332-339 contacts ATP; the sequence is GPNTGGKT. One can recognise a Smr domain in the interval 713–788; that stretch reads VDLRGMDAEE…GTGVTVVELK (76 aa).

Belongs to the DNA mismatch repair MutS family. MutS2 subfamily. As to quaternary structure, homodimer. Binds to stalled ribosomes, contacting rRNA.

Its function is as follows. Endonuclease that is involved in the suppression of homologous recombination and thus may have a key role in the control of bacterial genetic diversity. Acts as a ribosome collision sensor, splitting the ribosome into its 2 subunits. Detects stalled/collided 70S ribosomes which it binds and splits by an ATP-hydrolysis driven conformational change. Acts upstream of the ribosome quality control system (RQC), a ribosome-associated complex that mediates the extraction of incompletely synthesized nascent chains from stalled ribosomes and their subsequent degradation. Probably generates substrates for RQC. This chain is Endonuclease MutS2, found in Clostridium botulinum (strain Kyoto / Type A2).